We begin with the raw amino-acid sequence, 294 residues long: Cytidine deaminase (294 aa).

2 consecutive CMP/dCMP-type deaminase domains span residues 48-168 (DDDA…FGPK) and 187-294 (ALTD…RITF). Substrate is bound at residue 89–91 (NME). Residue His-102 participates in Zn(2+) binding. Residue Glu-104 is the Proton donor of the active site. Residues Cys-129 and Cys-132 each contribute to the Zn(2+) site.

It belongs to the cytidine and deoxycytidylate deaminase family. As to quaternary structure, homodimer. Zn(2+) serves as cofactor.

It carries out the reaction cytidine + H2O + H(+) = uridine + NH4(+). It catalyses the reaction 2'-deoxycytidine + H2O + H(+) = 2'-deoxyuridine + NH4(+). Its function is as follows. This enzyme scavenges exogenous and endogenous cytidine and 2'-deoxycytidine for UMP synthesis. The sequence is that of Cytidine deaminase from Serratia proteamaculans (strain 568).